A 463-amino-acid chain; its full sequence is Kynureninase 2 (463 aa).

Residues leucine 134, threonine 135, phenylalanine 162–aspartate 165, aspartate 247, histidine 250, and tyrosine 272 contribute to the pyridoxal 5'-phosphate site. N6-(pyridoxal phosphate)lysine is present on lysine 273. Residues tryptophan 312 and asparagine 340 each coordinate pyridoxal 5'-phosphate.

This sequence belongs to the kynureninase family. Homodimer. Requires pyridoxal 5'-phosphate as cofactor.

It is found in the cytoplasm. It carries out the reaction L-kynurenine + H2O = anthranilate + L-alanine + H(+). The catalysed reaction is 3-hydroxy-L-kynurenine + H2O = 3-hydroxyanthranilate + L-alanine + H(+). The protein operates within amino-acid degradation; L-kynurenine degradation; L-alanine and anthranilate from L-kynurenine: step 1/1. It participates in cofactor biosynthesis; NAD(+) biosynthesis; quinolinate from L-kynurenine: step 2/3. Functionally, catalyzes the cleavage of L-kynurenine (L-Kyn) and L-3-hydroxykynurenine (L-3OHKyn) into anthranilic acid (AA) and 3-hydroxyanthranilic acid (3-OHAA), respectively. This Aspergillus niger (strain ATCC MYA-4892 / CBS 513.88 / FGSC A1513) protein is Kynureninase 2 (bna5-2).